A 22-amino-acid polypeptide reads, in one-letter code: Melittin-like peptide (22 aa).

A Glutamine amide modification is found at Gln22.

In terms of tissue distribution, expressed by the skin dorsal glands.

It is found in the secreted. This is Melittin-like peptide from Rana temporaria (European common frog).